The primary structure comprises 676 residues: F420-dependent formate dehydrogenase 2 subunit alpha (676 aa).

In terms of domain architecture, 4Fe-4S Mo/W bis-MGD-type spans 4-60; sequence FKVVHTICPYCGTGCGIDLVVKDGKVVDSHPFKRHPVNEGKVCIKGNYCYEFVHSED. [4Fe-4S] cluster contacts are provided by C11, C14, C18, and C46. U133 is a non-standard amino acid (selenocysteine).

The protein belongs to the prokaryotic molybdopterin-containing oxidoreductase family. Dimer of an alpha (FdhA2) and a beta (FdhB2) subunit. It depends on [4Fe-4S] cluster as a cofactor. Mo-bis(molybdopterin guanine dinucleotide) is required as a cofactor. Requires Zn(2+) as cofactor.

The enzyme catalyses oxidized coenzyme F420-(gamma-L-Glu)(n) + formate + 2 H(+) = reduced coenzyme F420-(gamma-L-Glu)(n) + CO2. In terms of biological role, catalyzes the oxidation of formate to carbon dioxide, with coenzyme F420 as the electron acceptor. In vitro can also use methyl viologen as electron acceptor. This chain is F420-dependent formate dehydrogenase 2 subunit alpha, found in Methanococcus maripaludis (strain DSM 14266 / JCM 13030 / NBRC 101832 / S2 / LL).